Here is a 71-residue protein sequence, read N- to C-terminus: Small ribosomal subunit protein bS21 (71 aa).

It belongs to the bacterial ribosomal protein bS21 family.

The polypeptide is Small ribosomal subunit protein bS21 (Buchnera aphidicola subsp. Acyrthosiphon pisum (strain 5A)).